The following is a 653-amino-acid chain: Fusexin 1 (653 aa).

The N-terminal stretch at 1 to 24 (MKRVGNCWKASVAAFFLLMFTAFA) is a signal peptide. Residues 25 to 559 (AADTTSVDTV…FENIWSGDAN (535 aa)) lie on the Extracellular side of the membrane. Disulfide bonds link Cys129-Cys167, Cys398-Cys441, Cys468-Cys487, and Cys499-Cys516. Positions 155–160 (DYWTGS) are fusion loop. The helical transmembrane segment at 560–580 (ALNWLQVFVTFIAFLGGFALV) threads the bilayer. Residues 581 to 604 (GVKLGKIVDGLATEFIPVKDSHVR) are Cytoplasmic-facing. 2 helical membrane passes run 605–625 (LVIG…LVTD) and 626–646 (PLGL…YLSA). Topologically, residues 647 to 653 (SAPEINL) are cytoplasmic.

Belongs to the HAP2/GCS1 family. Fusexin 1 subfamily. As to quaternary structure, homotrimer stabilized by interdomain contacts and numerous Ca(2+) and Na(+) ions.

Its subcellular location is the cell surface. It localises to the cell membrane. Functionally, exhibits fusogenic activity. Mediates cell-cell fusion in mammalian cells (bilateral fusion). The sequence is that of Fusexin 1 from Haloplanus natans (strain DSM 17983 / JCM 14081 / CGMCC 1.8972 / RE-101).